The following is a 107-amino-acid chain: Stellacyanin (107 aa).

The region spanning 1 to 105 (TVYTVGDSAG…GQKVHINVTV (105 aa)) is the Phytocyanin domain. An N-linked (GlcNAc...) asparagine glycan is attached at Asn28. His46 is a binding site for Cu cation. Cys59 and Cys93 are disulfide-bonded. Asn60 carries N-linked (GlcNAc...) asparagine glycosylation. Positions 87, 92, and 97 each coordinate Cu cation. The N-linked (GlcNAc...) asparagine glycan is linked to Asn102.

This chain is Stellacyanin, found in Toxicodendron vernicifluum (Japanese lacquer tree).